We begin with the raw amino-acid sequence, 302 residues long: Gamma-gliadin (302 aa).

Positions 1 to 19 (MKTLLILTILAMATTIATA) are cleaved as a signal peptide. The disordered stretch occupies residues 27–159 (GQVQWPQQQP…QSFPQQQQPA (133 aa)). A compositionally biased stretch (low complexity) spans 42 to 102 (QPFCQQPQRT…PQPQQTFPQQ (61 aa)). Pro residues predominate over residues 103 to 124 (PQLPFPQQPQQPFPQPQQPQQP). Positions 125–159 (FPQSQQPQQPFPQPQQQFPQPQQPQQSFPQQQQPA) are enriched in low complexity.

This sequence belongs to the gliadin/glutenin family.

Gliadin is the major seed storage protein in wheat. This chain is Gamma-gliadin, found in Triticum aestivum (Wheat).